The primary structure comprises 620 residues: NADPH-dependent diflavin oxidoreductase 1 (620 aa).

Positions 6–168 constitute a Flavodoxin-like domain; that stretch reads IAILYGSETG…VYSEFEKRVL (163 aa). FMN-binding positions include 12–17, 59–62, and 106–115; these read SETGTA, STTG, and LGDSSYSKFN. The FAD-binding FR-type domain maps to 222–475; that stretch reads SSVKYGTVVT…LLPAGKQDRP (254 aa). FAD is bound by residues arginine 380, 410–413, and 442–445; these read RFFS and GLCT. 535–536 contributes to the NADP(+) binding site; it reads SR. Residue tryptophan 620 participates in FAD binding.

It belongs to the NADPH-dependent diflavin oxidoreductase NDOR1 family. In the N-terminal section; belongs to the flavodoxin family. The protein in the C-terminal section; belongs to the flavoprotein pyridine nucleotide cytochrome reductase family. In terms of assembly, interacts with DRE2; as part of the cytosolic iron-sulfur (Fe-S) protein assembly (CIA) machinery. FAD serves as cofactor. The cofactor is FMN.

The protein localises to the cytoplasm. It is found in the mitochondrion. It catalyses the reaction 2 oxidized [2Fe-2S]-[protein] + NADPH = 2 reduced [2Fe-2S]-[protein] + NADP(+) + H(+). Functionally, NADPH-dependent reductase which is a central component of the cytosolic iron-sulfur (Fe-S) protein assembly (CIA) machinery. Transfers electrons from NADPH via its FAD and FMN prosthetic groups to the [2Fe-2S] cluster of DRE2, another key component of the CIA machinery. In turn, this reduced cluster provides electrons for assembly of cytosolic iron-sulfur cluster proteins. Positively controls H(2)O(2)-induced cell death. This Eremothecium gossypii (strain ATCC 10895 / CBS 109.51 / FGSC 9923 / NRRL Y-1056) (Yeast) protein is NADPH-dependent diflavin oxidoreductase 1.